Here is a 626-residue protein sequence, read N- to C-terminus: Putative Xaa-Pro dipeptidyl-peptidase (626 aa).

Active-site charge relay system residues include serine 231, aspartate 348, and histidine 379.

It belongs to the peptidase S15 family.

The catalysed reaction is Hydrolyzes Xaa-Pro-|- bonds to release unblocked, N-terminal dipeptides from substrates including Ala-Pro-|-p-nitroanilide and (sequentially) Tyr-Pro-|-Phe-Pro-|-Gly-Pro-|-Ile.. This is Putative Xaa-Pro dipeptidyl-peptidase from Rhodopirellula baltica (strain DSM 10527 / NCIMB 13988 / SH1).